Consider the following 1173-residue polypeptide: DNA polymerase catalytic subunit (1173 aa).

2 disordered regions span residues 554–625 and 1123–1144; these read PSLP…SASG and EGPGRGEGLGVGGGEGTRPPRK. The span at 564-578 shows a compositional bias: gly residues; that stretch reads GGDGAGLEGGDGGTA. Residues 591 to 606 are compositionally biased toward acidic residues; it reads DGEDEDDPEGGDEGEN. Over residues 607 to 618 the composition is skewed to basic and acidic residues; that stretch reads GECRENGLEKEG. Over residues 1123–1138 the composition is skewed to gly residues; sequence EGPGRGEGLGVGGGEG.

This sequence belongs to the DNA polymerase type-B family.

The protein localises to the host nucleus. It catalyses the reaction DNA(n) + a 2'-deoxyribonucleoside 5'-triphosphate = DNA(n+1) + diphosphate. The protein is DNA polymerase catalytic subunit (UL54) of Rattus.